A 227-amino-acid chain; its full sequence is Extracellular small neutral protease (227 aa).

Residues 1 to 29 (MRITLPLLSTAVGLGLTAAVLGTGPAATA) form the signal peptide. A propeptide spanning residues 30-42 (AAPQEPVRAAQLG) is cleaved from the precursor. The Ca(2+) site is built by Asp156 and Thr158. His163 contributes to the Zn(2+) binding site. Glu164 is an active-site residue. Positions 167 and 173 each coordinate Zn(2+). The cysteines at positions 179 and 192 are disulfide-linked.

The protein belongs to the peptidase M7 family. Requires Ca(2+) as cofactor. Zn(2+) is required as a cofactor. In terms of processing, the N-terminus is blocked.

It localises to the secreted. It carries out the reaction Hydrolyzes proteins with a preference for Tyr or Phe in the P1' position. Has no action on amino-acid p-nitroanilides.. The sequence is that of Extracellular small neutral protease (snpA) from Streptomyces lividans.